The chain runs to 305 residues: Dermonecrotic toxin LiSicTox-alphaIA2aiii (305 aa).

An N-terminal signal peptide occupies residues 1-17 (LPYIALILVCWSVLSQA). The propeptide occupies 18–25 (AQTDVEER). His37 is an active-site residue. Glu57 and Asp59 together coordinate Mg(2+). His73 serves as the catalytic Nucleophile. Intrachain disulfides connect Cys77–Cys83 and Cys79–Cys222. Asp117 contacts Mg(2+). Asn282 carries an N-linked (GlcNAc...) asparagine glycan.

It belongs to the arthropod phospholipase D family. Class II subfamily. Requires Mg(2+) as cofactor. Expressed by the venom gland.

It localises to the secreted. It catalyses the reaction an N-(acyl)-sphingosylphosphocholine = an N-(acyl)-sphingosyl-1,3-cyclic phosphate + choline. It carries out the reaction an N-(acyl)-sphingosylphosphoethanolamine = an N-(acyl)-sphingosyl-1,3-cyclic phosphate + ethanolamine. The enzyme catalyses a 1-acyl-sn-glycero-3-phosphocholine = a 1-acyl-sn-glycero-2,3-cyclic phosphate + choline. The catalysed reaction is a 1-acyl-sn-glycero-3-phosphoethanolamine = a 1-acyl-sn-glycero-2,3-cyclic phosphate + ethanolamine. In terms of biological role, dermonecrotic toxins cleave the phosphodiester linkage between the phosphate and headgroup of certain phospholipids (sphingolipid and lysolipid substrates), forming an alcohol (often choline) and a cyclic phosphate. This toxin acts on sphingomyelin (SM). It may also act on ceramide phosphoethanolamine (CPE), lysophosphatidylcholine (LPC) and lysophosphatidylethanolamine (LPE), but not on lysophosphatidylserine (LPS), and lysophosphatidylglycerol (LPG). It acts by transphosphatidylation, releasing exclusively cyclic phosphate products as second products. Induces dermonecrosis, hemolysis, increased vascular permeability, edema, inflammatory response, and platelet aggregation. The protein is Dermonecrotic toxin LiSicTox-alphaIA2aiii of Loxosceles intermedia (Brown spider).